Here is a 226-residue protein sequence, read N- to C-terminus: ATP-dependent dethiobiotin synthetase BioD (226 aa).

13-18 provides a ligand contact to ATP; that stretch reads DVGKTL. Thr-17 provides a ligand contact to Mg(2+). The active site involves Lys-38. ATP is bound by residues Asp-55, 117–120, 177–178, 206–208, and Glu-213; these read EGAG, NR, and PFV. Mg(2+)-binding residues include Asp-55 and Glu-117.

The protein belongs to the dethiobiotin synthetase family. As to quaternary structure, homodimer. Mg(2+) serves as cofactor.

It localises to the cytoplasm. It carries out the reaction (7R,8S)-7,8-diammoniononanoate + CO2 + ATP = (4R,5S)-dethiobiotin + ADP + phosphate + 3 H(+). It participates in cofactor biosynthesis; biotin biosynthesis; biotin from 7,8-diaminononanoate: step 1/2. Its function is as follows. Catalyzes a mechanistically unusual reaction, the ATP-dependent insertion of CO2 between the N7 and N8 nitrogen atoms of 7,8-diaminopelargonic acid (DAPA, also called 7,8-diammoniononanoate) to form a ureido ring. The protein is ATP-dependent dethiobiotin synthetase BioD of Aeromonas salmonicida (strain A449).